The primary structure comprises 123 residues: Small ribosomal subunit protein uS12 (123 aa).

The disordered stretch occupies residues 1–28 (MPTIQQLIRKPREPKRVRSKSQHLESCP). 3-methylthioaspartic acid is present on D89.

This sequence belongs to the universal ribosomal protein uS12 family. Part of the 30S ribosomal subunit. Contacts proteins S8 and S17. May interact with IF1 in the 30S initiation complex.

Functionally, with S4 and S5 plays an important role in translational accuracy. In terms of biological role, interacts with and stabilizes bases of the 16S rRNA that are involved in tRNA selection in the A site and with the mRNA backbone. Located at the interface of the 30S and 50S subunits, it traverses the body of the 30S subunit contacting proteins on the other side and probably holding the rRNA structure together. The combined cluster of proteins S8, S12 and S17 appears to hold together the shoulder and platform of the 30S subunit. The polypeptide is Small ribosomal subunit protein uS12 (Cereibacter sphaeroides (strain ATCC 17029 / ATH 2.4.9) (Rhodobacter sphaeroides)).